The sequence spans 554 residues: MWLLAISLVGLLVVVVCVFLRFSKDKGLDGIVNEKKRDKNSAPRVSASGEDGTKNEQVEKKSDPSGGLGEENEKTNSESKVLSVPSDQNINKTLPVMLPSLELRKYDENETPGKVVNRRLLVSTNEMKYGRNGYEVFQGVYGRRSSVAVKCLDLAHTTEAFIQNEIDNHCLCDDHSNIIRFHGLEQDQSFAYICLEPWKCSLDDLIKLSVRRTKRDTQAVAPVDDLEKVMKRIKFWKEKGKPLPLTPMLKLMRDVVCGLAHLHKLKTIHRNLNPQNVLIIVKDMTLTAKISDMSLSKHLGGKKSSYKHLATCSGSSGWQAPEQLNKDKKKKEDFPADMFNFGCLLHYAVMGTHPFGSPSERDTNIKTNNKTNLSLVTNLEAINLIEQLLNYKPDLRPSATQVLLHPLFWDSEKRLFFLREASDRIELDITMWGDLNKTIAPRVLGESKDWASKLGKTFITHIENLAQAQPGQESRQYNRSYKYWSLRHLLRLIRNILSHHREILDDPKIKEMVGKVPEGLDIFFTARFPNLMMEIYAFISMHCKGEEAFEKYFN.

An N-terminal signal peptide occupies residues 1 to 17 (MWLLAISLVGLLVVVVC). A disordered region spans residues 36-85 (KRDKNSAPRVSASGEDGTKNEQVEKKSDPSGGLGEENEKTNSESKVLSVP). Positions 51–63 (DGTKNEQVEKKSD) are enriched in basic and acidic residues. Residues 121 to 408 (LVSTNEMKYG…ATQVLLHPLF (288 aa)) form the Protein kinase domain. ATP is bound at residue K150. The KEN domain occupies 411 to 554 (SEKRLFFLRE…GEEAFEKYFN (144 aa)).

It belongs to the protein kinase superfamily. Ser/Thr protein kinase family.

In Arabidopsis thaliana (Mouse-ear cress), this protein is Inactive serine/threonine-protein kinase/endoribonuclease IRE1-like.